Here is a 407-residue protein sequence, read N- to C-terminus: Probable NADPH dehydrogenase (407 aa).

FMN is bound by residues threonine 49 and glutamine 124. 201–204 (HGAH) is a substrate binding site. Catalysis depends on tyrosine 206, which acts as the Proton donor. Positions 254 and 357 each coordinate FMN.

The protein belongs to the NADH:flavin oxidoreductase/NADH oxidase family. FMN serves as cofactor.

The enzyme catalyses A + NADPH + H(+) = AH2 + NADP(+). Functionally, oxidoreductase that binds mammalian estrogens with high affinity. This chain is Probable NADPH dehydrogenase, found in Candida albicans (Yeast).